A 271-amino-acid polypeptide reads, in one-letter code: Monalysin (271 aa).

Residues 1 to 33 (MTIKEELGQPQSHSIELDEVSKEAASTRAALTS) constitute a propeptide that is removed on maturation. Residues 102–170 (IPQNVTTTLS…FTDTTEMKGP (69 aa)) are pore-forming domain.

Pro-Monalysin forms a stable donut-like 18-mer complex composed of two disk-shaped nonamers held together by N-terminal swapping of the pro-peptides. After proteolytic cleavage, the inactive 18-mer complex probably dissociates into two disk-shaped active nonamers in which the transmembrane segments are unmasked and ready to engage the conformational change leading to the pore formation into the target membrane. Multimerizes into circular-like structures and barrel-like aggregates. Requires N-terminal cleavage to become fully active. The metalloprotease AprA can induce the rapid cleavage of pro-Monalysin into its active form. Can also be processed by trypsin.

The protein localises to the secreted. It localises to the host cell membrane. Its function is as follows. Pore-forming toxin that contributes to the virulence of P.entomophila against Drosophila, playing an important role in host intestinal damage and lethality. Displays cytolytic and hemolytic activity. In Pseudomonas entomophila (strain L48), this protein is Monalysin.